The sequence spans 938 residues: RIPOR family member 3 (938 aa).

3 positions are modified to phosphoserine: Ser-9, Ser-24, and Ser-340. A Phosphothreonine modification is found at Thr-345. 2 positions are modified to phosphoserine: Ser-351 and Ser-384. Disordered stretches follow at residues 402–430 and 579–603; these read EMDS…FLPV and FGGS…SPSE.

Belongs to the RIPOR family.

The chain is RIPOR family member 3 from Mus musculus (Mouse).